The following is a 413-amino-acid chain: Cardiolipin synthase B (413 aa).

PLD phosphodiesterase domains are found at residues 108 to 135 (IFRRMHRKIVVIDDRIAFVGGINYSAEH) and 285 to 312 (RRRPLHGKVALMDDHWATVGSSNLDPLS). Catalysis depends on residues His113, Lys115, Asp120, His290, Lys292, and Asp297. The interval 388 to 413 (AQVPPPAQPEMETQDRVDPENSGVKP) is disordered.

This sequence belongs to the phospholipase D family. Cardiolipin synthase subfamily. ClsB sub-subfamily.

The protein resides in the cell membrane. The catalysed reaction is 2 a 1,2-diacyl-sn-glycero-3-phospho-(1'-sn-glycerol) = a cardiolipin + glycerol. Catalyzes the phosphatidyl group transfer from one phosphatidylglycerol molecule to another to form cardiolipin (CL) (diphosphatidylglycerol) and glycerol. This chain is Cardiolipin synthase B, found in Salmonella typhi.